We begin with the raw amino-acid sequence, 40 residues long: Photosystem II reaction center protein X (40 aa).

The Lumenal segment spans residues 1–11; the sequence is TITPSLKGFFI. The helical transmembrane segment at 12-28 threads the bilayer; it reads GLLSGAVVLGLTFAVLI. The Cytoplasmic segment spans residues 29–40; sequence AISQIDKVQRSL.

It belongs to the PsbX family. Type 1 subfamily. As to quaternary structure, PSII is composed of 1 copy each of membrane proteins PsbA, PsbB, PsbC, PsbD, PsbE, PsbF, PsbH, PsbI, PsbJ, PsbK, PsbL, PsbM, PsbT, PsbX, PsbY, PsbZ, Psb30/Ycf12, peripheral proteins PsbO, CyanoQ (PsbQ), PsbU, PsbV and a large number of cofactors. It forms dimeric complexes. Requires PSII binds multiple chlorophylls, carotenoids and specific lipids. as cofactor.

The protein resides in the cellular thylakoid membrane. Involved in the binding and/or turnover of quinones at the Q(B) site of photosystem II (PSII). PSII is a light-driven water plastoquinone oxidoreductase, using light energy to abstract electrons from H(2)O, generating a proton gradient subsequently used for ATP formation. This is Photosystem II reaction center protein X from Thermostichus vulcanus (Synechococcus vulcanus).